We begin with the raw amino-acid sequence, 1270 residues long: DNA-directed RNA polymerase subunit beta (1270 aa).

Belongs to the RNA polymerase beta chain family. The RNAP catalytic core consists of 2 alpha, 1 beta, 1 beta' and 1 omega subunit. When a sigma factor is associated with the core the holoenzyme is formed, which can initiate transcription.

It catalyses the reaction RNA(n) + a ribonucleoside 5'-triphosphate = RNA(n+1) + diphosphate. DNA-dependent RNA polymerase catalyzes the transcription of DNA into RNA using the four ribonucleoside triphosphates as substrates. The sequence is that of DNA-directed RNA polymerase subunit beta from Christiangramia forsetii (strain DSM 17595 / CGMCC 1.15422 / KT0803) (Gramella forsetii).